A 422-amino-acid polypeptide reads, in one-letter code: Histidine--tRNA ligase (422 aa).

The protein belongs to the class-II aminoacyl-tRNA synthetase family. Homodimer.

Its subcellular location is the cytoplasm. It catalyses the reaction tRNA(His) + L-histidine + ATP = L-histidyl-tRNA(His) + AMP + diphosphate + H(+). This is Histidine--tRNA ligase from Aliivibrio fischeri (strain ATCC 700601 / ES114) (Vibrio fischeri).